The sequence spans 582 residues: NudC domain-containing protein 1 (582 aa).

Ser7 is subject to Phosphoserine. A CS domain is found at 272–360; the sequence is KVEPLYYWQQ…NEGLMWPELV (89 aa). The residue at position 387 (Ser387) is a Phosphoserine.

The protein resides in the cytoplasm. Its subcellular location is the nucleus. The protein is NudC domain-containing protein 1 of Mus musculus (Mouse).